A 324-amino-acid chain; its full sequence is MKPSVILYKTLPDDLQKRLEEHFTVTQMKNLNPETVAEHADAFASAAGLLGSSEKVDTALLEKMPKLRATSTISVGYDNFDVDALNTRKILLMHTPYALTETVADTLMALVLSTARRVVEVAERVKAGEWTKSIGPDWFGVDVHGKTLGIVGMGRIGLALAQRAHFGFNMPILYNARRHHSEAEERFEARYCELETLLQEADYVCLILPLTDETHHLIGKAEFEKMKKSAIFINAGRGPVVDEKALIEALQKGEIHAAGLDVFEQEPLPVDSPLLTMSNVVSLPHIGSATHETRYNMAATAVDNLINALNGNVEKNCVNPHVNA.

Catalysis depends on residues arginine 237 and glutamate 266. The active-site Proton donor is the histidine 285.

This sequence belongs to the D-isomer specific 2-hydroxyacid dehydrogenase family. GhrB subfamily. As to quaternary structure, homodimer.

It is found in the cytoplasm. The enzyme catalyses glycolate + NADP(+) = glyoxylate + NADPH + H(+). It carries out the reaction (R)-glycerate + NAD(+) = 3-hydroxypyruvate + NADH + H(+). It catalyses the reaction (R)-glycerate + NADP(+) = 3-hydroxypyruvate + NADPH + H(+). Functionally, catalyzes the NADPH-dependent reduction of glyoxylate and hydroxypyruvate into glycolate and glycerate, respectively. The sequence is that of Glyoxylate/hydroxypyruvate reductase B from Enterobacter sp. (strain 638).